A 328-amino-acid polypeptide reads, in one-letter code: dITP/XTP pyrophosphatase (328 aa).

The unknown stretch occupies residues 1-129; that stretch reads MSEKIYEYKD…ATSEQGFGDI (129 aa). The NTP pyrophosphatase stretch occupies residues 130-324; it reads ILIATRNEGK…KLMEVFPAWQ (195 aa). 134–139 lines the substrate pocket; it reads TRNEGK. Residue aspartate 196 is the Proton acceptor of the active site. Aspartate 196 is a binding site for Mg(2+). Residues serine 197, 280–283, lysine 303, and 308–309 contribute to the substrate site; these read FGYD and HR.

Belongs to the HAM1 NTPase family. Homodimer. Mg(2+) is required as a cofactor.

The catalysed reaction is XTP + H2O = XMP + diphosphate + H(+). The enzyme catalyses dITP + H2O = dIMP + diphosphate + H(+). It catalyses the reaction ITP + H2O = IMP + diphosphate + H(+). Its function is as follows. Pyrophosphatase that catalyzes the hydrolysis of nucleoside triphosphates to their monophosphate derivatives, with a high preference for the non-canonical purine nucleotides XTP (xanthosine triphosphate), dITP (deoxyinosine triphosphate) and ITP. Seems to function as a house-cleaning enzyme that removes non-canonical purine nucleotides from the nucleotide pool, thus preventing their incorporation into DNA/RNA and avoiding chromosomal lesions. This is dITP/XTP pyrophosphatase from Streptococcus pyogenes serotype M1.